A 201-amino-acid chain; its full sequence is Small ribosomal subunit protein uS4c (201 aa).

The S4 RNA-binding domain maps to 89 to 150 (MRLDNILFRL…KQRSKVLIQN (62 aa)).

Belongs to the universal ribosomal protein uS4 family. In terms of assembly, part of the 30S ribosomal subunit. Contacts protein S5. The interaction surface between S4 and S5 is involved in control of translational fidelity.

The protein localises to the plastid. It is found in the chloroplast. In terms of biological role, one of the primary rRNA binding proteins, it binds directly to 16S rRNA where it nucleates assembly of the body of the 30S subunit. Its function is as follows. With S5 and S12 plays an important role in translational accuracy. The protein is Small ribosomal subunit protein uS4c (rps4) of Acorus calamus (Sweet flag).